The primary structure comprises 132 residues: Small ribosomal subunit protein uS8 (132 aa).

Belongs to the universal ribosomal protein uS8 family. As to quaternary structure, part of the 30S ribosomal subunit. Contacts proteins S5 and S12.

One of the primary rRNA binding proteins, it binds directly to 16S rRNA central domain where it helps coordinate assembly of the platform of the 30S subunit. This chain is Small ribosomal subunit protein uS8, found in Methylocella silvestris (strain DSM 15510 / CIP 108128 / LMG 27833 / NCIMB 13906 / BL2).